The following is a 422-amino-acid chain: Gamma-glutamyl phosphate reductase (422 aa).

This sequence belongs to the gamma-glutamyl phosphate reductase family.

It is found in the cytoplasm. The catalysed reaction is L-glutamate 5-semialdehyde + phosphate + NADP(+) = L-glutamyl 5-phosphate + NADPH + H(+). It participates in amino-acid biosynthesis; L-proline biosynthesis; L-glutamate 5-semialdehyde from L-glutamate: step 2/2. In terms of biological role, catalyzes the NADPH-dependent reduction of L-glutamate 5-phosphate into L-glutamate 5-semialdehyde and phosphate. The product spontaneously undergoes cyclization to form 1-pyrroline-5-carboxylate. This is Gamma-glutamyl phosphate reductase from Shewanella piezotolerans (strain WP3 / JCM 13877).